The chain runs to 434 residues: Epimerase FSL3 (434 aa).

125–126 (GF) is a substrate binding site. Residue Glu392 is the Proton acceptor of the active site.

This sequence belongs to the aldose epimerase family. As to quaternary structure, monomer.

It participates in secondary metabolite biosynthesis. Its function is as follows. Epimerase; part of the gene cluster that mediates the biosynthesis of fusarielins F, G and H, decaketide compounds with 5 methylations and a decaline core that act as mycoestrogens as they stimulate growth of MCF-7 breast cancer cells. The initial compound in the pathway is produced by the reducing polyketide synthase FSL1. FSL1 lacks an active enoyl reductase (ER) domain and biosynthesis of fusarielins relies on the trans-acting enoyl reductase FSL5, before it is released through hydrolysis catalyzed by the thioesterase FSL2. Fusarielins F, G, and H have a C11=C12 cis double bond and is fully reduced between C10 and C11 and between C12 and C13. FSL3 can be involved in the formation of the C11=C12 cis double bond by moving a hypothetical C10=C11 or C12=C13 trans double bond to form prefusarielin. Prefusarielin is oxygenated at C15 and C16 by the cytochrome P450 monooxygenase FSL4, resulting in fusarielin F, which subsequently is epoxidized into fusarielin G by the same enzyme. The final step in the pathway is a reduction of the carboxylic acid moiety to yield fusarielin H via a still undetermined mechanism. The chain is Epimerase FSL3 from Gibberella zeae (strain ATCC MYA-4620 / CBS 123657 / FGSC 9075 / NRRL 31084 / PH-1) (Wheat head blight fungus).